Reading from the N-terminus, the 465-residue chain is MSLRDCQAWKNAGLPLSTTSNEACKLFDATLTQYVKWTNDKSLGGIEGCLSKLRAADPTFAMGLAISNGLVLVGTGTSVALDKDLALAVKTMVELSQTQTLTPREQLHVSAVEMFAKGNFPRACDLWEQILRDHPTDMLALKFSHDAYFYLGYQEQMRDSVARVYPFWTPDIPLNSYVKGIYSFGLMETNFYDQAQKLAKEALSIEPTDAWSVHTVAHVHEMRAEIKDGLEFMQQSEGHWKDSDMLACHNYWHWALYLIEKGDYEAALTIYDSHILPSLQASGTMLDVVDSCSMLYRLQMEGVPLGQRWQTVLPVTQKHTRDHILLFNDAHFLMASLGARDLQTTRELLTTLQEASKSPGENCQHQLAKDVGLPLCQALLEAENGNPDRVLELLLPIRYRIVQIGGSNAQRDVFNQLLIHAAMTCTSSVHKNVARSLLMERDALKPNSPLTERLIRRAAAVHLMQ.

TPR repeat units lie at residues 104 to 137 (REQLHVSAVEMFAKGNFPRACDLWEQILRDHPTD), 176 to 209 (SYVKGIYSFGLMETNFYDQAQKLAKEALSIEPTD), and 248 to 281 (CHNYWHWALYLIEKGDYEAALTIYDSHILPSLQA).

It belongs to the TTC38 family.

This chain is Tetratricopeptide repeat protein 38 (Ttc38), found in Mus musculus (Mouse).